Reading from the N-terminus, the 377-residue chain is Ribosomal RNA large subunit methyltransferase G (377 aa).

It belongs to the methyltransferase superfamily. RlmG family.

Its subcellular location is the cytoplasm. The catalysed reaction is guanosine(1835) in 23S rRNA + S-adenosyl-L-methionine = N(2)-methylguanosine(1835) in 23S rRNA + S-adenosyl-L-homocysteine + H(+). Functionally, specifically methylates the guanine in position 1835 (m2G1835) of 23S rRNA. The polypeptide is Ribosomal RNA large subunit methyltransferase G (Shewanella sp. (strain ANA-3)).